The primary structure comprises 739 residues: AN1-type zinc finger protein 4 (739 aa).

Residues 54 to 129 (MELFIETLTG…LKLVLAMRGG (76 aa)) enclose the Ubiquitin-like domain. Over residues 246–255 (KPKKVVKVKP) the composition is skewed to basic residues. Disordered stretches follow at residues 246 to 270 (KPKK…STAA) and 287 to 316 (LPSG…RPVS). An AN1-type zinc finger spans residues 673 to 720 (KKIMKHCFLCGKKTGLATSFECRCGNNFCASHRYAEAHGCTYDYKSAG). Zn(2+) contacts are provided by Cys-679, Cys-682, Cys-694, Cys-696, Cys-701, His-704, His-710, and Cys-712.

The protein is AN1-type zinc finger protein 4 (Zfand4) of Mus musculus (Mouse).